We begin with the raw amino-acid sequence, 1242 residues long: Reverse gyrase 1 (1242 aa).

An RG N-terminal-type zinc finger spans residues 6 to 46 (KVPPSIYTRSCPNCGGNISSQRLFNGSVCESCLKDDREFSN). Cysteine 16, cysteine 19, cysteine 34, and cysteine 37 together coordinate Zn(2+). Residues glutamine 93 and 110–117 (APPGLGKT) each bind ATP. The 202-residue stretch at 97–298 (TIRFLRGESF…SLMGFRPGSS (202 aa)) folds into the Helicase ATP-binding domain. The short motif at 214–217 (DDVD) is the DEAD box element. The tract at residues 615 to 1242 (LSVKTTLFIV…ELYNEIQTIS (628 aa)) is topoisomerase I. One can recognise a Toprim domain in the interval 619–785 (TTLFIVESPN…NIKRAEFHEV (167 aa)). A Mg(2+)-binding site is contributed by glutamate 625. The RG C-terminal-type; atypical zinc finger occupies 703-731 (IKKCEKGHQIVKDLSQNKCPICGSRIVTD). Zn(2+) contacts are provided by cysteine 706, histidine 710, cysteine 721, and cysteine 724. Mg(2+) is bound at residue aspartate 754. A Topo IA-type catalytic domain is found at 801-1242 (NDNLVKSQIV…ELYNEIQTIS (442 aa)). The active-site O-(5'-phospho-DNA)-tyrosine intermediate is the tyrosine 965.

In the N-terminal section; belongs to the DEAD box helicase family. DDVD subfamily. It in the C-terminal section; belongs to the type IA topoisomerase family. Monomer. Requires Zn(2+) as cofactor. Mg(2+) serves as cofactor.

The protein resides in the cytoplasm. The catalysed reaction is ATP + H2O = ADP + phosphate + H(+). At least one of the two reverse gyrase proteins is inhibited by actinomycin D. Highly sensitive to NaCl concentrations, maximal positive supercoiling is observed with 10 mM NaCl; as NaCl rises, supercoiling decreases. At 300 mM NaCl relaxes but does not introduce positive supercoils into negatively supercoiled substrate, at 400 mM NaCl does not relax DNA. In terms of biological role, modifies the topological state of DNA by introducing positive supercoils in an ATP-dependent process. Increases the linking number in steps of +1. Involved in homeostatic control of DNA topology in balance with type II topoisomerase 6 (TopoVI); levels of TopoVI are constant at 80 and 88 degrees Celsius and TopoVI is probably less active at 88 degrees (characterized enzyme is from S.shibatae B12), so reverse gyrase mediates most of the fine-tuning of DNA topology. Changes the DNA linking number step-by-step in a distributive manner. At low protein to DNA ratios mostly relaxes negatively supercoiled substrate, as ratios rise more positive supercoils are introduced. At 90 degrees Celsius introduces 19 positive supercoils into pTZ18R DNA (probably 2860 bp), less than TopR2. Relaxes negatively supercoiled DNA in the absence of ATP. It cleaves transiently a single DNA strand and remains covalently bound to the 5' DNA end through a tyrosine residue. May be involved in DNA damage response. Its activity is inhibited by the DNA-binding protein 7d (Sso7d), suggesting that the Sso7d activity might counteract the overwinding effect of reverse gyrase. Functionally, resolves 4-way Holliday junctions (HJ) with 20 bases in each arm in vitro, distorting the junction. Very high protein levels are required, but total enzyme content of the cell (there are 2 reverse gyrases in this organism) is estimated to be 20-200 molecules/cell. HJ resolution does not require either ATPase activity or the active tyrosine. The individual domains do not resolve HJs but do so when mixed. Also unwinds a fork substrate. Its function is as follows. There are 2 genes for this protein in the cell. During exponential growth this is the less expressed isoform (about 52 molecules per cell at 80 degrees Celsius, about 28 molecules at 88 degrees Celsius); this isoform is more active at higher temperature. Grows actively at both 80 and 88 degrees Celsius; survives a long exposure at 45 degrees Celsius without DNA replication or cell division occurring. Experiments using whole cell extracts do not distinguish which isoform is present, the results are probably a mixture of the two forms. The protein is Reverse gyrase 1 of Saccharolobus solfataricus (strain ATCC 35092 / DSM 1617 / JCM 11322 / P2) (Sulfolobus solfataricus).